We begin with the raw amino-acid sequence, 443 residues long: Threonine/serine transporter TdcC (443 aa).

The next 11 membrane-spanning stretches (helical) occupy residues 22–42 (TTWTLGLFGTAIGAGVLFFPI), 44–64 (AGFGGLIPILLMLVLAYPIAF), 97–117 (GVVITFLYFFAICPLLWIYGV), 140–160 (FVALFLLLLMAFVIWFGKDLM), 163–183 (VMSYLVWPFIASLVLISLSLI), 207–227 (ILVTVWLGISIMVFSFNFSPI), 259–279 (ASMLMVAVVMFFAFSCLFTLS), 319–339 (ASIIALVAIFKSFFGHYLGTL), 366–386 (ISMIFIMGSTWVVAYANPNIL), 389–409 (IEAMGAPIIASLLCLLPMYAI), and 423–443 (DNVFVTLIGLLTILNIVYKLF).

It belongs to the amino acid/polyamine transporter 2 family. SdaC/TdcC subfamily.

Its subcellular location is the cell inner membrane. It catalyses the reaction L-threonine(in) + H(+)(in) = L-threonine(out) + H(+)(out). It carries out the reaction L-serine(in) + H(+)(in) = L-serine(out) + H(+)(out). Functionally, involved in the import of threonine and serine into the cell, with the concomitant import of a proton (symport system). This is Threonine/serine transporter TdcC from Salmonella newport (strain SL254).